The primary structure comprises 335 residues: Ketol-acid reductoisomerase (NADP(+)) 2 (335 aa).

In terms of domain architecture, KARI N-terminal Rossmann spans 1-180 (MKTYYEQDAN…GCTRAGVIET (180 aa)). Residues 24–27 (YGSQ), arginine 47, serine 51, and 81–84 (DEQQ) each bind NADP(+). The active site involves histidine 106. Glycine 132 serves as a coordination point for NADP(+). One can recognise a KARI C-terminal knotted domain in the interval 181–326 (TFQEETETDL…EELREMMSWI (146 aa)). Aspartate 189, glutamate 193, glutamate 225, and glutamate 229 together coordinate Mg(2+). Serine 250 contacts substrate.

This sequence belongs to the ketol-acid reductoisomerase family. Mg(2+) serves as cofactor.

It catalyses the reaction (2R)-2,3-dihydroxy-3-methylbutanoate + NADP(+) = (2S)-2-acetolactate + NADPH + H(+). The enzyme catalyses (2R,3R)-2,3-dihydroxy-3-methylpentanoate + NADP(+) = (S)-2-ethyl-2-hydroxy-3-oxobutanoate + NADPH + H(+). It participates in amino-acid biosynthesis; L-isoleucine biosynthesis; L-isoleucine from 2-oxobutanoate: step 2/4. It functions in the pathway amino-acid biosynthesis; L-valine biosynthesis; L-valine from pyruvate: step 2/4. Its function is as follows. Involved in the biosynthesis of branched-chain amino acids (BCAA). Catalyzes an alkyl-migration followed by a ketol-acid reduction of (S)-2-acetolactate (S2AL) to yield (R)-2,3-dihydroxy-isovalerate. In the isomerase reaction, S2AL is rearranged via a Mg-dependent methyl migration to produce 3-hydroxy-3-methyl-2-ketobutyrate (HMKB). In the reductase reaction, this 2-ketoacid undergoes a metal-dependent reduction by NADPH to yield (R)-2,3-dihydroxy-isovalerate. This is Ketol-acid reductoisomerase (NADP(+)) 2 from Bacillus thuringiensis subsp. konkukian (strain 97-27).